Here is a 220-residue protein sequence, read N- to C-terminus: Large ribosomal subunit protein uL16 (220 aa).

Belongs to the universal ribosomal protein uL16 family. In terms of assembly, component of the small ribosomal subunit. Mature ribosomes consist of a small (40S) and a large (60S) subunit. The 40S subunit contains about 33 different proteins and 1 molecule of RNA (18S). The 60S subunit contains about 49 different proteins and 3 molecules of RNA (25S, 5.8S and 5S).

This Zea mays (Maize) protein is Large ribosomal subunit protein uL16 (RPL10).